Here is a 237-residue protein sequence, read N- to C-terminus: Protein lin-31 (237 aa).

The segment at residues Gln12–Leu103 is a DNA-binding region (fork-head). 2 disordered regions span residues Arg110–Glu141 and Asn195–Ser237. Composition is skewed to low complexity over residues Ser206–Ser216 and Ser227–Ser237.

It localises to the nucleus. Lin-31 regulates how vulval precursor cells choose their fate. It helps specify three alternative cell fates in vulval development. In Caenorhabditis elegans, this protein is Protein lin-31 (lin-31).